The primary structure comprises 472 residues: Tubulin gamma chain (472 aa).

142–148 (AGGTGSG) serves as a coordination point for GTP.

It belongs to the tubulin family. As to quaternary structure, component of the gamma-tubulin small complex (gamma-TuSC) composed of tubulin gamma chain, gamma-tubulin complex protein 2 (GCP2) and gamma-tubulin complex protein 3 (GCP3). Interacts with GCP2 and GCP3. Interacts with EB1.

The protein resides in the cytoplasm. Its subcellular location is the cytoskeleton. The protein localises to the flagellum axoneme. It localises to the flagellum basal body. It is found in the spindle. The protein resides in the microtubule organizing center. Functionally, tubulin is the major constituent of microtubules (Potential). The gamma chain is found at microtubule organizing centers (MTOC) such as the centrosome. Component of the gamma-tubulin small complex (gamma-TuSC) involved in microtubule nucleation for the formation of median bodies and in the biogenesis of flagella. Gamma-TuSC may be required for the correct positioning of EB1 within the trophozoites. This is Tubulin gamma chain from Giardia intestinalis (strain ATCC 50803 / WB clone C6) (Giardia lamblia).